The chain runs to 346 residues: MAGVSEAERRGHRKLVRFQARRAIGPIRPTSAAWDRDFDPAGKRIAVVGTDAAAAHYISRLSESAASVTVFTQAPRRVVTGVPLWTTRAKRWLRRRTGAEHPAVAWATAAIDALTSSGIRTSDGVEHPVDAIIYGTGFAIADQVGDQTLVGAGGVTIRQAWDDGMEPYLGVAVHGFPNYFFITGPDTAAQARCVVECMKLMERTASRRIEVRRSSQQVFNERAQLKPAQPHRQTGGLEAFDLSSAATEDDQTYDGAATLTLAGARFRVRVRLTGHLDPIDGNYHWQGTVFDSLPETSLTHARAATLTIGGRSAPARITEQTPWGTHSVAGVGPPPYARSGPASATT.

Residues 321–346 are disordered; that stretch reads TPWGTHSVAGVGPPPYARSGPASATT.

This is an uncharacterized protein from Mycobacterium tuberculosis (strain CDC 1551 / Oshkosh).